The chain runs to 307 residues: MTAGSPEECGEVRRSPEGRVSRLGRRLGRRRRPRSPPEPLRVRARLRLRSPSGAFAALGALVVLVGMGIAVAGYWPHRAGAPGSRAANASSPQMSELRREGRGGGRAHGPHERLRLLGPVIMGVGLFVFICANTLLYENRDLETRRLRQGVLRAQALRPPDGPGWDCALLPSPGPRSPRAVGCAEPEIWDPSPRRGTSPVPSVRSLRSEPANPRLGLPALLNSYPLKGPGLPPPWGPRTQTGHVIITVQPSGSCIEHSKSLDLGLGELLLGAPAARDCAHRSWPRLDRLSLGGYAKLGGGGDLGARV.

The segment at 1 to 38 (MTAGSPEECGEVRRSPEGRVSRLGRRLGRRRRPRSPPE) is disordered. A compositionally biased stretch (basic and acidic residues) spans 10-20 (GEVRRSPEGRV). Residues 22–34 (RLGRRLGRRRRPR) are compositionally biased toward basic residues. A helical membrane pass occupies residues 53–73 (GAFAALGALVVLVGMGIAVAG). Residues 81-111 (APGSRAANASSPQMSELRREGRGGGRAHGPH) are disordered. Residue Asn88 is glycosylated (N-linked (GlcNAc...) asparagine). Positions 96–111 (ELRREGRGGGRAHGPH) are enriched in basic and acidic residues. The helical transmembrane segment at 116–136 (LLGPVIMGVGLFVFICANTLL) threads the bilayer. The tract at residues 180 to 211 (AVGCAEPEIWDPSPRRGTSPVPSVRSLRSEPA) is disordered.

This sequence belongs to the TMEM200 family.

The protein localises to the membrane. This is Transmembrane protein 200B (TMEM200B) from Homo sapiens (Human).